The primary structure comprises 432 residues: Short/branched chain specific acyl-CoA dehydrogenase, mitochondrial (432 aa).

Residues 1–33 (MEGLAVRLLRGSRLLRRNFLTCLSSWKIPPHVS) constitute a mitochondrion transit peptide. An N6-acetyllysine; alternate modification is found at Lys70. Position 70 is an N6-succinyllysine; alternate (Lys70). FAD contacts are provided by residues 174–183 (FCLSEAGAGS) and 207–209 (WIS). Ser183 contacts substrate. At Ser183 the chain carries Phosphoserine. Substrate contacts are provided by Tyr229 and Tyr283. Lys284 bears the N6-acetyllysine; alternate mark. Position 284 is an N6-succinyllysine; alternate (Lys284). Substrate is bound at residue 291–294 (NEGR). Residues Arg319, Gln330, and 387–391 (EWMGG) contribute to the FAD site. Glu414 acts as the Proton acceptor in catalysis. 416–418 (ASN) is an FAD binding site. The residue at position 426 (Lys426) is an N6-acetyllysine.

Belongs to the acyl-CoA dehydrogenase family. In terms of assembly, homotetramer. FAD serves as cofactor. As to expression, ubiquitously expressed.

It is found in the mitochondrion matrix. The enzyme catalyses 2-methylbutanoyl-CoA + oxidized [electron-transfer flavoprotein] + H(+) = (2E)-2-methylbut-2-enoyl-CoA + reduced [electron-transfer flavoprotein]. It catalyses the reaction (2S)-2-methylbutanoyl-CoA + oxidized [electron-transfer flavoprotein] + H(+) = (2E)-2-methylbut-2-enoyl-CoA + reduced [electron-transfer flavoprotein]. The catalysed reaction is (2R)-2-methylbutanoyl-CoA + oxidized [electron-transfer flavoprotein] + H(+) = ethylacryloyl-CoA + reduced [electron-transfer flavoprotein]. It carries out the reaction butanoyl-CoA + oxidized [electron-transfer flavoprotein] + H(+) = (2E)-butenoyl-CoA + reduced [electron-transfer flavoprotein]. The enzyme catalyses 2-methylpropanoyl-CoA + oxidized [electron-transfer flavoprotein] + H(+) = 2-methylpropenoyl-CoA + reduced [electron-transfer flavoprotein]. It catalyses the reaction hexanoyl-CoA + oxidized [electron-transfer flavoprotein] + H(+) = (2E)-hexenoyl-CoA + reduced [electron-transfer flavoprotein]. The catalysed reaction is 2-methylhexanoyl-CoA + oxidized [electron-transfer flavoprotein] + H(+) = 2-methylhexenoyl-CoA + reduced [electron-transfer flavoprotein]. It carries out the reaction valproyl-CoA + oxidized [electron-transfer flavoprotein] + H(+) = (2E)-2-propylpent-2-enoyl-CoA + reduced [electron-transfer flavoprotein]. Its pathway is lipid metabolism; mitochondrial fatty acid beta-oxidation. It functions in the pathway amino-acid degradation; L-isoleucine degradation. Its activity is regulated as follows. Competitively inhibited by valproyl-CoA. Functionally, short and branched chain specific acyl-CoA dehydrogenase that catalyzes the removal of one hydrogen from C-2 and C-3 of the fatty acyl-CoA thioester, resulting in the formation of trans-2-enoyl-CoA. Among the different mitochondrial acyl-CoA dehydrogenases, acts specifically on short and branched chain acyl-CoA derivatives such as (S)-2-methylbutyryl-CoA as well as short straight chain acyl-CoAs such as butyryl-CoA. Plays an important role in the metabolism of L-isoleucine by catalyzing the dehydrogenation of 2-methylbutyryl-CoA, one of the steps of the L-isoleucine catabolic pathway. Can also act on valproyl-CoA, a metabolite of valproic acid, an antiepileptic drug. The chain is Short/branched chain specific acyl-CoA dehydrogenase, mitochondrial from Homo sapiens (Human).